A 601-amino-acid chain; its full sequence is UBA domain-containing protein 3 (601 aa).

An Arf-GAP domain is found at 7–129; that stretch reads ETAIRELVQS…LFLDENHSTN (123 aa). Disordered regions lie at residues 123–158 and 289–310; these read DENHSTNSKPPSLPPRTKSSSQSSPMASTSTSKSRY and EPNQPLQPLRPSMTGPVPSSMG. Residues 139-156 are compositionally biased toward low complexity; the sequence is TKSSSQSSPMASTSTSKS. Residues 157 to 197 form the UBA domain; the sequence is RYADSLSTLHDMGFSDDSVNTHALEETNGDVTRAIEKIVQH.

The sequence is that of UBA domain-containing protein 3 (ucp3) from Schizosaccharomyces pombe (strain 972 / ATCC 24843) (Fission yeast).